A 92-amino-acid polypeptide reads, in one-letter code: Small ribosomal subunit protein uS19 (92 aa).

The protein belongs to the universal ribosomal protein uS19 family.

In terms of biological role, protein S19 forms a complex with S13 that binds strongly to the 16S ribosomal RNA. The protein is Small ribosomal subunit protein uS19 of Chelativorans sp. (strain BNC1).